The chain runs to 158 residues: C-type lectin galactose-binding isoform (158 aa).

The N-terminal stretch at 1-23 (MGRFLLVTLSLLVMAFFLNGANS) is a signal peptide. 3 cysteine pairs are disulfide-bonded: Cys26–Cys37, Cys54–Cys154, and Cys129–Cys146. The 123-residue stretch at 33-155 (RNGFCYKVFN…CTALRPFLCQ (123 aa)) folds into the C-type lectin domain. Ca(2+) contacts are provided by Gln119, Asp121, and Glu127. The short motif at 119–121 (QPD) is the Galactose-binding element. Asn134 carries N-linked (GlcNAc...) asparagine glycosylation. Ca(2+)-binding residues include Asn142 and Asp143.

It belongs to the true venom lectin family. As to quaternary structure, dimer. Probably disulfide-linked homodimer. Expressed by the venom gland.

Its subcellular location is the secreted. In terms of biological role, galactose-binding lectin that binds to and agglutinates erythrocytes in a calcium-dependent manner. In Pseudechis australis (Mulga snake), this protein is C-type lectin galactose-binding isoform.